Consider the following 588-residue polypeptide: Protein kintoun (588 aa).

3 disordered regions span residues 199-223 (PGYEAKEPPEERDLSPSTSHLPENS), 338-498 (PPLE…SSQE), and 510-535 (AANVNASDETSKRKPTEEQLEDADED). The segment covering 202-212 (EAKEPPEERDL) has biased composition (basic and acidic residues). Over residues 350 to 361 (PNPTSDPQNENQ) the composition is skewed to polar residues. Basic and acidic residues-rich tracts occupy residues 362–382 (TRVEERVEEMAEKGGEQHQRG) and 393–433 (QVLE…KFEL). The span at 435 to 447 (DVQQENKGNCSNT) shows a compositional bias: polar residues. Positions 448–460 (KEVKCCRRTKDSL) are enriched in basic and acidic residues.

Belongs to the PIH1 family. Kintoun subfamily.

It localises to the cytoplasm. It is found in the dynein axonemal particle. Required for cytoplasmic pre-assembly of axonemal dyneins, thereby playing a central role in motility in cilia and flagella. Involved in pre-assembly of dynein arm complexes in the cytoplasm before intraflagellar transport loads them for the ciliary compartment. This is Protein kintoun from Oryzias latipes (Japanese rice fish).